The following is a 202-amino-acid chain: Adenylyl-sulfate kinase (202 aa).

An ATP-binding site is contributed by 35–42 (GLSGSGKS). S109 (phosphoserine intermediate) is an active-site residue.

It belongs to the APS kinase family.

The enzyme catalyses adenosine 5'-phosphosulfate + ATP = 3'-phosphoadenylyl sulfate + ADP + H(+). The protein operates within sulfur metabolism; hydrogen sulfide biosynthesis; sulfite from sulfate: step 2/3. In terms of biological role, catalyzes the synthesis of activated sulfate. The polypeptide is Adenylyl-sulfate kinase (Bacteroides fragilis (strain YCH46)).